A 436-amino-acid polypeptide reads, in one-letter code: Methylenetetrahydrofolate--tRNA-(uracil-5-)-methyltransferase TrmFO (436 aa).

FAD is bound at residue 9–14 (GAGLAG).

Belongs to the MnmG family. TrmFO subfamily. FAD is required as a cofactor.

The protein resides in the cytoplasm. It catalyses the reaction uridine(54) in tRNA + (6R)-5,10-methylene-5,6,7,8-tetrahydrofolate + NADH + H(+) = 5-methyluridine(54) in tRNA + (6S)-5,6,7,8-tetrahydrofolate + NAD(+). The enzyme catalyses uridine(54) in tRNA + (6R)-5,10-methylene-5,6,7,8-tetrahydrofolate + NADPH + H(+) = 5-methyluridine(54) in tRNA + (6S)-5,6,7,8-tetrahydrofolate + NADP(+). Functionally, catalyzes the folate-dependent formation of 5-methyl-uridine at position 54 (M-5-U54) in all tRNAs. In Acetivibrio thermocellus (strain ATCC 27405 / DSM 1237 / JCM 9322 / NBRC 103400 / NCIMB 10682 / NRRL B-4536 / VPI 7372) (Clostridium thermocellum), this protein is Methylenetetrahydrofolate--tRNA-(uracil-5-)-methyltransferase TrmFO.